A 283-amino-acid chain; its full sequence is Putative replication protein XF_b0001 (283 aa).

This Xylella fastidiosa (strain 9a5c) protein is Putative replication protein XF_b0001.